The chain runs to 309 residues: Ribonuclease Z (309 aa).

Zn(2+) is bound by residues His63, His65, Asp67, His68, His141, Asp212, and His270. Asp67 acts as the Proton acceptor in catalysis.

It belongs to the RNase Z family. In terms of assembly, homodimer. The cofactor is Zn(2+).

The catalysed reaction is Endonucleolytic cleavage of RNA, removing extra 3' nucleotides from tRNA precursor, generating 3' termini of tRNAs. A 3'-hydroxy group is left at the tRNA terminus and a 5'-phosphoryl group is left at the trailer molecule.. Its function is as follows. Zinc phosphodiesterase, which displays some tRNA 3'-processing endonuclease activity. Probably involved in tRNA maturation, by removing a 3'-trailer from precursor tRNA. The chain is Ribonuclease Z from Lactobacillus delbrueckii subsp. bulgaricus (strain ATCC 11842 / DSM 20081 / BCRC 10696 / JCM 1002 / NBRC 13953 / NCIMB 11778 / NCTC 12712 / WDCM 00102 / Lb 14).